The primary structure comprises 245 residues: Ribonuclease PH (245 aa).

Residues R93 and 131 to 133 (GTR) contribute to the phosphate site.

This sequence belongs to the RNase PH family. Homohexameric ring arranged as a trimer of dimers.

The catalysed reaction is tRNA(n+1) + phosphate = tRNA(n) + a ribonucleoside 5'-diphosphate. Functionally, phosphorolytic 3'-5' exoribonuclease that plays an important role in tRNA 3'-end maturation. Removes nucleotide residues following the 3'-CCA terminus of tRNAs; can also add nucleotides to the ends of RNA molecules by using nucleoside diphosphates as substrates, but this may not be physiologically important. Probably plays a role in initiation of 16S rRNA degradation (leading to ribosome degradation) during starvation. This is Ribonuclease PH from Corynebacterium glutamicum (strain ATCC 13032 / DSM 20300 / JCM 1318 / BCRC 11384 / CCUG 27702 / LMG 3730 / NBRC 12168 / NCIMB 10025 / NRRL B-2784 / 534).